The primary structure comprises 625 residues: Dopamine beta-hydroxylase (625 aa).

Topologically, residues 1–9 (MQVPSPSAR) are cytoplasmic. The helical; Signal-anchor for type II membrane protein transmembrane segment at 10–30 (EAASMYGTAVAVFLVLLVAVL) threads the bilayer. At 31-625 (QGLAPPESPL…TVVNIGGGKV (595 aa)) the chain is on the intragranular side. The DOMON domain occupies 50-166 (GDLELSWDVS…GTVHLVYGVL (117 aa)). 6 cysteine pairs are disulfide-bonded: C147–C604, C224–C275, C261–C287, C382–C495, C386–C573, and C458–C480. An N-linked (GlcNAc...) asparagine glycan is attached at N177. Residue Y222 is part of the active site. The Cu(2+) site is built by H254 and H255. N315 carries an N-linked (GlcNAc...) asparagine glycan. Residues H325, H404, H406, and M479 each contribute to the Cu(2+) site. Residue H404 is part of the active site. The N-linked (GlcNAc...) asparagine glycan is linked to N574.

Belongs to the copper type II ascorbate-dependent monooxygenase family. As to quaternary structure, homotetramer; composed of two disulfide-linked dimers. The cofactor is Cu(2+). In terms of processing, proteolytic cleavage after the membrane-anchor leads to the release of the soluble form. N-glycosylated.

It is found in the cytoplasmic vesicle. Its subcellular location is the secretory vesicle lumen. The protein resides in the secretory vesicle. It localises to the chromaffin granule lumen. The protein localises to the secreted. It is found in the secretory vesicle membrane. Its subcellular location is the chromaffin granule membrane. It catalyses the reaction dopamine + 2 L-ascorbate + O2 = (R)-noradrenaline + 2 monodehydro-L-ascorbate radical + H2O. It participates in catecholamine biosynthesis; (R)-noradrenaline biosynthesis; (R)-noradrenaline from dopamine: step 1/1. Its function is as follows. Catalyzes the hydroxylation of dopamine to noradrenaline (also known as norepinephrine), and is thus vital for regulation of these neurotransmitters. This Canis lupus familiaris (Dog) protein is Dopamine beta-hydroxylase (DBH).